An 897-amino-acid polypeptide reads, in one-letter code: Translation initiation factor IF-2 (897 aa).

Disordered stretches follow at residues 69-88 (RKTKSTISVQGTGGKNKEVQ) and 95-304 (RTYV…NAMK). Positions 101–161 (SALEDEQRQA…EEKARIEAQQ (61 aa)) are enriched in basic and acidic residues. Over residues 162-179 (KARQAQQPAKAAGSTAQQ) the composition is skewed to low complexity. Basic and acidic residues-rich tracts occupy residues 180–196 (EAEKMAKREAEELKRQQ), 203–217 (KAEELAAKKAEEARV), 226–239 (WAEEEAARAKESSD), and 277–286 (RREDDRDARN). Basic residues predominate over residues 287 to 296 (PRARKGKRGK). A tr-type G domain is found at 397-566 (PRAPVVTIMG…LIQSEVLELK (170 aa)). The interval 406–413 (GHVDHGKT) is G1. GTP is bound at residue 406–413 (GHVDHGKT). The G2 stretch occupies residues 431–435 (GITQH). The segment at 452–455 (DTPG) is G3. GTP contacts are provided by residues 452 to 456 (DTPGH) and 506 to 509 (NKID). Residues 506–509 (NKID) are G4. The tract at residues 542-544 (SAK) is G5.

The protein belongs to the TRAFAC class translation factor GTPase superfamily. Classic translation factor GTPase family. IF-2 subfamily.

The protein resides in the cytoplasm. In terms of biological role, one of the essential components for the initiation of protein synthesis. Protects formylmethionyl-tRNA from spontaneous hydrolysis and promotes its binding to the 30S ribosomal subunits. Also involved in the hydrolysis of GTP during the formation of the 70S ribosomal complex. This is Translation initiation factor IF-2 from Aeromonas hydrophila subsp. hydrophila (strain ATCC 7966 / DSM 30187 / BCRC 13018 / CCUG 14551 / JCM 1027 / KCTC 2358 / NCIMB 9240 / NCTC 8049).